A 70-amino-acid polypeptide reads, in one-letter code: Large ribosomal subunit protein bL31 (70 aa).

Positions 16, 18, 36, and 39 each coordinate Zn(2+).

The protein belongs to the bacterial ribosomal protein bL31 family. Type A subfamily. Part of the 50S ribosomal subunit. Zn(2+) is required as a cofactor.

Binds the 23S rRNA. This Tolumonas auensis (strain DSM 9187 / NBRC 110442 / TA 4) protein is Large ribosomal subunit protein bL31.